The primary structure comprises 311 residues: Manganese-dependent inorganic pyrophosphatase (311 aa).

His10, Asp14, Asp16, Asp75, His97, and Asp149 together coordinate Mn(2+).

This sequence belongs to the PPase class C family. As to quaternary structure, homodimer. Mn(2+) is required as a cofactor.

It catalyses the reaction diphosphate + H2O = 2 phosphate + H(+). The protein is Manganese-dependent inorganic pyrophosphatase (ppaC) of Methanothrix thermoacetophila (strain DSM 6194 / JCM 14653 / NBRC 101360 / PT) (Methanosaeta thermophila).